A 406-amino-acid chain; its full sequence is Arginine deiminase (406 aa).

The active-site Amidino-cysteine intermediate is C396.

The protein belongs to the arginine deiminase family.

The protein resides in the cytoplasm. The catalysed reaction is L-arginine + H2O = L-citrulline + NH4(+). It participates in amino-acid degradation; L-arginine degradation via ADI pathway; carbamoyl phosphate from L-arginine: step 1/2. This Aliivibrio salmonicida (strain LFI1238) (Vibrio salmonicida (strain LFI1238)) protein is Arginine deiminase.